Consider the following 659-residue polypeptide: L-type lectin-domain containing receptor kinase V.7 (659 aa).

A signal peptide spans 1 to 25; the sequence is MSHKVLQIVLVLLLTLFSSTHNSNG. A legume-lectin like region spans residues 22-244; the sequence is NSNGNFLMEE…GALYYVMQFS (223 aa). Topologically, residues 26-275 are extracellular; the sequence is NFLMEEAAAA…PKKSYDRTRR (250 aa). 4 N-linked (GlcNAc...) asparagine glycosylation sites follow: asparagine 45, asparagine 64, asparagine 110, and asparagine 192. A helical transmembrane segment spans residues 276-296; sequence ILAVCLTLAVFTALVASGIGF. The Cytoplasmic portion of the chain corresponds to 297-659; it reads VFYVRHKKVK…LTNSFVSHGR (363 aa). Residues 333-595 enclose the Protein kinase domain; that stretch reads FKEKQLLGKG…GLLCAHHTEL (263 aa). ATP contacts are provided by residues 339-347 and lysine 362; that span reads LGKGGFGQV. Catalysis depends on aspartate 462, which acts as the Proton acceptor.

This sequence in the C-terminal section; belongs to the protein kinase superfamily. Ser/Thr protein kinase family. It in the N-terminal section; belongs to the leguminous lectin family.

The protein localises to the cell membrane. It catalyses the reaction L-seryl-[protein] + ATP = O-phospho-L-seryl-[protein] + ADP + H(+). It carries out the reaction L-threonyl-[protein] + ATP = O-phospho-L-threonyl-[protein] + ADP + H(+). In terms of biological role, involved in resistance response to the pathogenic oomycetes Phytophthora infestans and Phytophthora capsici and to the pathogenic bacteria Pseudomonas syringae. This Arabidopsis thaliana (Mouse-ear cress) protein is L-type lectin-domain containing receptor kinase V.7.